Here is a 511-residue protein sequence, read N- to C-terminus: DEP domain-containing protein 7 (511 aa).

The 91-residue stretch at 46 to 136 (LQTQVEVKKR…SSCSLYRFTT (91 aa)) folds into the DEP domain.

Belongs to the DEPDC7 family. As to expression, expressed in liver.

This Homo sapiens (Human) protein is DEP domain-containing protein 7 (DEPDC7).